The sequence spans 130 residues: Small ribosomal subunit protein uS11c (130 aa).

This sequence belongs to the universal ribosomal protein uS11 family. Part of the 30S ribosomal subunit.

It localises to the plastid. The protein resides in the chloroplast. The chain is Small ribosomal subunit protein uS11c from Chara vulgaris (Common stonewort).